The sequence spans 1046 residues: MGETEQRPTAGSRLGAQENAGISTLEHGQKPPLTPPGKLISIKIQMLDDTQETFEVPQRAPGKVLHDAVCNHLNLVEGDYFGLEFPDHKKMMVWLDLLKPVMKQIRRPKHVVVKFVVKFFPPDHAQLQEELTRYLFALQVKQDLAQGRLTCNDTSTALLISHIVQSEIGDFDETIDREHLAKNKYIPQQEALEDKIMEFHRKHTGQTPAESDFQLLEIARRLEMYGIRLHPAKDREGTKINLAVANTGILVFQGHTKINAFNWAKVRKLSFKRKRFLIKLRPDVNSSFQDTLEFLMASRDFCKSFWKICVEHHAFFRLFEEPKPKPKPVLFSRGSSFRFSGRTQKQVLDYVKEGGHKKVQFERKHSKIRSIRSLTAQPSEQHAEVPKQSFQSSSFAYGDDSDAAAVQSCQQGKELKASTEDTGQHKSPSLKKSPKEGRKVDGAVVSAVEEEEEAATDRMQQNRPQSQQPSTAGSLTGSPHLSELSINSQGGPSVANMSLSPNLSPDAKQSSPLISPLLNDPSCIRTEEEEEVKKKRFPTEKAYFIAKEVATTERTYLKDLEVITSWFQSAVSKEDCMPETLKNLIFSNFEPLHKFHTGFLKEIEQRLALWEGRSNAHIKGGHQRIGDVMLKNIQGMKQLTIHLWKHNEILTELENGIKNSRKLETFCRDFELQKVCYLPLNTFLLRPLHRLMHYKQIMERLCKHYPPNHVDFRDSRAALAEITEMMAQLHGNMIKMENFQKLHELKKDLIGIDNLVIPGREFIRLGSLSKLSGKGLQQRMFFLFNDILLYTSRGLTASNQFKVHGHLPLYGMTIEDSEEEWGVPHCLTLRGQQQSIIVAASTRAEIDKWIEDIQMAIDLAEKSSDPVPELLASSPPDNKSPDETTVDQESEDDLSASRTSLERQSPHRGNTTVHVCWHRNTSVSMIDFSIAVENQLSGNLLRKFKNSNGWQKLWVVFTNFCMFFYKSHQDNHPLASLPLLGYSLTIPSESENIHKDYVFKLHFKSHVYYFRAESEYTFERWMEVIRSATSSALRTRALSHREPHTY.

The region spanning 40-320 is the FERM domain; sequence ISIKIQMLDD…EHHAFFRLFE (281 aa). The interval 374–522 is disordered; it reads LTAQPSEQHA…LISPLLNDPS (149 aa). Basic and acidic residues predominate over residues 413 to 424; it reads KELKASTEDTGQ. Polar residues predominate over residues 458–513; it reads RMQQNRPQSQQPSTAGSLTGSPHLSELSINSQGGPSVANMSLSPNLSPDAKQSSPL. The DH domain maps to 541-732; the sequence is KAYFIAKEVA…TEMMAQLHGN (192 aa). In terms of domain architecture, PH 1 spans 761 to 858; it reads EFIRLGSLSK…WIEDIQMAID (98 aa). The disordered stretch occupies residues 864 to 907; sequence SDPVPELLASSPPDNKSPDETTVDQESEDDLSASRTSLERQSPH. The span at 884 to 894 shows a compositional bias: acidic residues; that stretch reads TTVDQESEDDL. The 98-residue stretch at 933 to 1030 folds into the PH 2 domain; the sequence is ENQLSGNLLR…WMEVIRSATS (98 aa).

In terms of assembly, interacts with PLXNA4. Detected in lateral motor column motor neurons and in preganglionic autonomic motor neurons of the column of Terni in the embryonic spinal cord (at protein level).

It is found in the cell membrane. It localises to the synapse. The protein localises to the synaptosome. Its subcellular location is the cytoplasm. The protein resides in the cytosol. It is found in the cell projection. It localises to the filopodium. The protein localises to the dendrite. Its subcellular location is the dendritic spine. Its function is as follows. Functions as a guanine nucleotide exchange factor for RAC1. Plays a role in semaphorin signaling via its interaction with PLXNA4. Plays a role in the assembly and disassembly of dendritic filopodia, the formation of dendritic spines, regulation of dendrite length and ultimately the formation of synapses. The chain is FERM, ARHGEF and pleckstrin domain-containing protein 1 (FARP1) from Gallus gallus (Chicken).